A 166-amino-acid polypeptide reads, in one-letter code: Putative transmembrane protein encoded by LINC00477 (166 aa).

A glycan (N-linked (GlcNAc...) asparagine) is linked at Asn-7. 3 consecutive transmembrane segments (helical) span residues 15–35 (VSSF…FFLC), 41–61 (MTGC…VLGP), and 63–83 (PMGM…RFLG). A disordered region spans residues 127 to 166 (LPVPHPPSPLSKCPQHPRPRRTKGPGLRKLWGPGPPFFPS).

The protein resides in the membrane. This chain is Putative transmembrane protein encoded by LINC00477 (LINC00477), found in Homo sapiens (Human).